The sequence spans 92 residues: Acylphosphatase (92 aa).

The 88-residue stretch at Arg5–Phe92 folds into the Acylphosphatase-like domain. Active-site residues include Arg20 and Asn38.

It belongs to the acylphosphatase family.

It carries out the reaction an acyl phosphate + H2O = a carboxylate + phosphate + H(+). The chain is Acylphosphatase (acyP) from Pelotomaculum thermopropionicum (strain DSM 13744 / JCM 10971 / SI).